A 355-amino-acid chain; its full sequence is UDP-N-acetylglucosamine--N-acetylmuramyl-(pentapeptide) pyrophosphoryl-undecaprenol N-acetylglucosamine transferase (355 aa).

Residues 14–16 (TGG), Asn123, Arg164, Ser190, and Gln284 each bind UDP-N-acetyl-alpha-D-glucosamine.

This sequence belongs to the glycosyltransferase 28 family. MurG subfamily.

It localises to the cell inner membrane. It carries out the reaction di-trans,octa-cis-undecaprenyl diphospho-N-acetyl-alpha-D-muramoyl-L-alanyl-D-glutamyl-meso-2,6-diaminopimeloyl-D-alanyl-D-alanine + UDP-N-acetyl-alpha-D-glucosamine = di-trans,octa-cis-undecaprenyl diphospho-[N-acetyl-alpha-D-glucosaminyl-(1-&gt;4)]-N-acetyl-alpha-D-muramoyl-L-alanyl-D-glutamyl-meso-2,6-diaminopimeloyl-D-alanyl-D-alanine + UDP + H(+). The protein operates within cell wall biogenesis; peptidoglycan biosynthesis. Functionally, cell wall formation. Catalyzes the transfer of a GlcNAc subunit on undecaprenyl-pyrophosphoryl-MurNAc-pentapeptide (lipid intermediate I) to form undecaprenyl-pyrophosphoryl-MurNAc-(pentapeptide)GlcNAc (lipid intermediate II). The polypeptide is UDP-N-acetylglucosamine--N-acetylmuramyl-(pentapeptide) pyrophosphoryl-undecaprenol N-acetylglucosamine transferase (Synechocystis sp. (strain ATCC 27184 / PCC 6803 / Kazusa)).